Here is a 745-residue protein sequence, read N- to C-terminus: Poly(A) polymerase alpha (745 aa).

The span at 1 to 17 shows a compositional bias: low complexity; sequence MPFPVTTQGSQQTQPPQ. The interval 1–22 is disordered; that stretch reads MPFPVTTQGSQQTQPPQKHYGI. A phosphoserine mark is found at S10 and S24. Residues 100–102, T109, 113–115, D167, K228, Y237, and 246–247 each bind ATP; these read FGS, DID, and GV. Positions 113, 115, and 167 each coordinate Mg(2+). Residues K444, K445, K506, and K507 each participate in a glycyl lysine isopeptide (Lys-Gly) (interchain with G-Cter in SUMO) cross-link. The Nuclear localization signal 1 signature appears at 490–507; it reads RKQLHQLLPNHVLQKKKK. The ser/Thr-rich stretch occupies residues 508–643; the sequence is HSTEGVKLTA…TSGNAATKIP (136 aa). Low complexity predominate over residues 523-534; it reads LDLSMDSDNSMS. Disordered stretches follow at residues 523-565 and 577-704; these read LDLS…AVTA and SVPQ…SETI. Over residues 535–557 the composition is skewed to polar residues; the sequence is VPSPTSATKTSPLNSSGSSQGRN. Phosphoserine is present on residues S537 and S558. Low complexity-rich tracts occupy residues 583–594 and 611–640; these read SSESSGGTSSES and TVSRVVSSTRLVNPPPRSSGNAATSGNAAT. An N6-acetyllysine mark is found at K641 and K650. The Nuclear localization signal 2 motif lies at 650 to 665; the sequence is KRTSSPHKEESPKKTK. Composition is skewed to basic and acidic residues over residues 655-666 and 682-692; these read PHKEESPKKTKT and GHDKTEAKEQL. Residues 677 to 745 are required for interaction with NUDT21; sequence CLALSGHDKT…KNSIKLRLNR (69 aa). The span at 694–704 shows a compositional bias: low complexity; sequence TETSTTQSETI. K736 is subject to N6-acetyllysine; alternate. Residue K736 forms a Glycyl lysine isopeptide (Lys-Gly) (interchain with G-Cter in SUMO); alternate linkage. Phosphoserine is present on S738. K740 carries the N6-acetyllysine; alternate modification. Residue K740 forms a Glycyl lysine isopeptide (Lys-Gly) (interchain with G-Cter in SUMO); alternate linkage.

This sequence belongs to the poly(A) polymerase family. In terms of assembly, monomer. Found in a complex with CPSF1, FIP1L1 and PAPOLA. Interacts with AHCYL1 and FIP1L1; the interaction with AHCYL1 seems to increase interaction with FIP1L1. Interacts with NUDT21; the interaction is diminished by acetylation. Interacts with KPNB1; the interaction promotes PAP nuclear import and is inhibited by acetylation of PAP. Requires Mg(2+) as cofactor. Mn(2+) is required as a cofactor. Polysumoylated. Varying sumoylation depending on tissue- and cell-type. Highly sumoylated in bladder and NIH 3T3 cells. Sumoylation is required for nuclear localization and enhances PAP stability. Desumoylated by SENP1. Inhibits polymerase activity. Post-translationally, hyperphosphorylation on multiple CDK2 consensus and non-consensus sites in the C-terminal Ser/Thr-rich region represses PAP activity in late M-phase. Phosphorylation/dephosphorylation may regulate the interaction between PAP and CPSF. In terms of processing, acetylated in the C-terminus. Acetylation decreases interaction with NUDT21 and KPNB1, and inhibits nuclear localization through inhibiting binding to the importin alpha/beta complex.

It is found in the cytoplasm. The protein localises to the nucleus. It carries out the reaction RNA(n) + ATP = RNA(n)-3'-adenine ribonucleotide + diphosphate. Its function is as follows. Polymerase that creates the 3'-poly(A) tail of mRNA's. Also required for the endoribonucleolytic cleavage reaction at some polyadenylation sites. May acquire specificity through interaction with a cleavage and polyadenylation specificity factor (CPSF) at its C-terminus. This chain is Poly(A) polymerase alpha (PAPOLA), found in Homo sapiens (Human).